Here is a 98-residue protein sequence, read N- to C-terminus: NADH-ubiquinone oxidoreductase chain 4L (98 aa).

3 helical membrane passes run M1 to M21, S29 to L49, and I61 to V81.

It belongs to the complex I subunit 4L family. Core subunit of respiratory chain NADH dehydrogenase (Complex I) which is composed of 45 different subunits.

The protein localises to the mitochondrion inner membrane. The catalysed reaction is a ubiquinone + NADH + 5 H(+)(in) = a ubiquinol + NAD(+) + 4 H(+)(out). Core subunit of the mitochondrial membrane respiratory chain NADH dehydrogenase (Complex I) which catalyzes electron transfer from NADH through the respiratory chain, using ubiquinone as an electron acceptor. Part of the enzyme membrane arm which is embedded in the lipid bilayer and involved in proton translocation. This chain is NADH-ubiquinone oxidoreductase chain 4L (MT-ND4L), found in Sorex unguiculatus (Long-clawed shrew).